Reading from the N-terminus, the 166-residue chain is Alanine racemase (166 aa).

Residue Y62 is the Proton acceptor; specific for L-alanine of the active site. Position 110 (M110) interacts with substrate.

The protein belongs to the alanine racemase family. The cofactor is pyridoxal 5'-phosphate.

The enzyme catalyses L-alanine = D-alanine. The protein operates within amino-acid biosynthesis; D-alanine biosynthesis; D-alanine from L-alanine: step 1/1. Functionally, catalyzes the interconversion of L-alanine and D-alanine. May also act on other amino acids. The protein is Alanine racemase (alr) of Piscirickettsia salmonis.